We begin with the raw amino-acid sequence, 120 residues long: Immunoglobulin kappa variable 2D-26 (120 aa).

The signal sequence occupies residues 1–20 (MRLPAQLLGLLMLWVPGSSA). The interval 21-43 (EIVMTQTPLSLSITPGEQASMSC) is framework-1. Residues 21 to 120 (EIVMTQTPLS…YYCMQDAQDP (100 aa)) enclose the Ig-like domain. A disulfide bridge connects residues Cys43 and Cys113. Positions 44–59 (RSSQSLLHSDGYTYLY) are complementarity-determining-1. The framework-2 stretch occupies residues 60–74 (WFLQKARPVSTLLIY). Residues 75-81 (EVSNRFS) form a complementarity-determining-2 region. Residues 82-113 (GVPDRFSGSGSGTDFTLKISRVEAEDFGVYYC) form a framework-3 region. The interval 114–120 (MQDAQDP) is complementarity-determining-3.

As to quaternary structure, immunoglobulins are composed of two identical heavy chains and two identical light chains; disulfide-linked.

Its subcellular location is the secreted. The protein resides in the cell membrane. V region of the variable domain of immunoglobulin light chains that participates in the antigen recognition. Immunoglobulins, also known as antibodies, are membrane-bound or secreted glycoproteins produced by B lymphocytes. In the recognition phase of humoral immunity, the membrane-bound immunoglobulins serve as receptors which, upon binding of a specific antigen, trigger the clonal expansion and differentiation of B lymphocytes into immunoglobulins-secreting plasma cells. Secreted immunoglobulins mediate the effector phase of humoral immunity, which results in the elimination of bound antigens. The antigen binding site is formed by the variable domain of one heavy chain, together with that of its associated light chain. Thus, each immunoglobulin has two antigen binding sites with remarkable affinity for a particular antigen. The variable domains are assembled by a process called V-(D)-J rearrangement and can then be subjected to somatic hypermutations which, after exposure to antigen and selection, allow affinity maturation for a particular antigen. This chain is Immunoglobulin kappa variable 2D-26, found in Homo sapiens (Human).